The following is a 339-amino-acid chain: MVREEVAGSTQTLQWKCVESRVDSKRLYYGRFILSPLRKGQADTVGIALRRALLGEIEGTCITRAKFGXVPHEYSTIAGIEESVQEILLNLKEIVLRSNLYGVRDASICVKGPRYITAQDIILPPSVEIVDTXQPIANLTEPIDFCIDLQIKRDRGYQTELRKNYQDGSYPIDAVSMPVRNVNYSIFSCGNGNEKHEILFLEIWTNGSLTPKEALYEASRNLIDLFLPFLHAEEEGTSFEENKNRFTPPLFTFQKRLTNLKKNKKGIPLNYIFIDQLELTSRTYNCLKRANIHTLLDLLSKTEEDLMRIDSFRMEDRKHIWDTLEKHLPIDLLKNKLSF.

The interval 1–233 (MVREEVAGST…DLFLPFLHAE (233 aa)) is alpha N-terminal domain (alpha-NTD). Residues 264-339 (KKGIPLNYIF…IDLLKNKLSF (76 aa)) form an alpha C-terminal domain (alpha-CTD) region.

The protein belongs to the RNA polymerase alpha chain family. As to quaternary structure, in plastids the minimal PEP RNA polymerase catalytic core is composed of four subunits: alpha, beta, beta', and beta''. When a (nuclear-encoded) sigma factor is associated with the core the holoenzyme is formed, which can initiate transcription.

The protein localises to the plastid. It localises to the chloroplast. The catalysed reaction is RNA(n) + a ribonucleoside 5'-triphosphate = RNA(n+1) + diphosphate. Its function is as follows. DNA-dependent RNA polymerase catalyzes the transcription of DNA into RNA using the four ribonucleoside triphosphates as substrates. In Psathyrostachys rupestris (Hordeum rupestre), this protein is DNA-directed RNA polymerase subunit alpha.